Consider the following 202-residue polypeptide: Endothelin-1 (202 aa).

The N-terminal stretch at M1–G25 is a signal peptide. Positions T26–S50 are excised as a propeptide. 2 cysteine pairs are disulfide-bonded: C53–C67 and C55–C63. Residues V74 to H202 constitute a propeptide that is removed on maturation. The interval C110–C124 is endothelin-like.

Belongs to the endothelin/sarafotoxin family.

It localises to the secreted. Endothelins are endothelium-derived vasoconstrictor peptides. Probable ligand for G-protein coupled receptors EDNRA and EDNRB which activates PTK2B, BCAR1, BCAR3 and, GTPases RAP1 and RHOA cascade in glomerular mesangial cells. Also binds the DEAR/FBXW7-AS1 receptor. Promotes mesenteric arterial wall remodeling via activation of ROCK signaling and subsequent colocalization of NFATC3 with F-actin filaments. NFATC3 then translocates to the nucleus where it subsequently promotes the transcription of the smooth muscle hypertrophy and differentiation marker ACTA2. The protein is Endothelin-1 (EDN1) of Bos taurus (Bovine).